A 266-amino-acid polypeptide reads, in one-letter code: MVLNWRGVKSRLYSGKRRIDGRNKGLIAIRSRGGALKRKYRYIEHYKQKWMDKWLFVMRIEYDPNRSAHIALCSILKEGIYFYVISIAKLEVGSLIITSALKLGTLQVGNTTKIKNIPEGLLINNIELIENSGSKISRAAGTSSLIIKKYNKKYSLVKLSSKECRLISNECYATIGTVSNIERKLKQNKKASYSRKRGIRPIVRGLAMNPVDHPHGGRTKGGVHWKSFSGKLAYNVSSRKKTKMTSRYIIIGHRKQKIMDKQIKNG.

The protein belongs to the universal ribosomal protein uL2 family.

Its subcellular location is the mitochondrion. The protein is Large ribosomal subunit protein uL2m (mrpl2) of Dictyostelium discoideum (Social amoeba).